We begin with the raw amino-acid sequence, 235 residues long: Small ribosomal subunit protein uS3 (235 aa).

Positions valine 39–lysine 107 constitute a KH type-2 domain.

Belongs to the universal ribosomal protein uS3 family. In terms of assembly, part of the 30S ribosomal subunit. Forms a tight complex with proteins S10 and S14.

Functionally, binds the lower part of the 30S subunit head. Binds mRNA in the 70S ribosome, positioning it for translation. The chain is Small ribosomal subunit protein uS3 from Actinobacillus pleuropneumoniae serotype 5b (strain L20).